The chain runs to 664 residues: Prelamin-A/C (664 aa).

Position 1 is an N-acetylmethionine (Met1). A disordered region spans residues 1–25 (METPSQRRATRSGAQASSTPLSPTR). The segment at 1–33 (METPSQRRATRSGAQASSTPLSPTRITRLQEKE) is head. The segment at 1–130 (METPSQRRAT…TKKEGDLIAA (130 aa)) is interaction with MLIP. Thr3 is subject to Phosphothreonine. Phosphoserine is present on Ser5. Thr10 is modified (phosphothreonine). A phosphoserine mark is found at Ser12 and Ser18. Phosphothreonine is present on Thr19. Ser22 carries the post-translational modification Phosphoserine; by CDK1. In terms of domain architecture, IF rod spans 31–387 (EKEDLQELND…KLLEGEEERL (357 aa)). Lys32 is subject to N6-acetyllysine; alternate. Lys32 carries the N6-succinyllysine; alternate modification. Residue Lys32 forms a Glycyl lysine isopeptide (Lys-Gly) (interchain with G-Cter in SUMO2); alternate linkage. Positions 34–70 (DLQELNDRLAVYIDRVRSLETENAGLRLRITESEEVV) are coil 1A. Residues Ser51, Ser66, and Ser71 each carry the phosphoserine modification. The interval 71-80 (SREVSGIKAA) is linker 1. N6-acetyllysine is present on residues Lys78 and Lys97. The interval 81–218 (YEAELGDARK…NIYSEELRET (138 aa)) is coil 1B. Residue Lys97 forms a Glycyl lysine isopeptide (Lys-Gly) (interchain with G-Cter in SUMO2) linkage. Phosphoserine is present on Ser107. An N6-acetyllysine mark is found at Lys108, Lys114, Lys123, Lys135, Lys144, and Lys155. N6-acetyllysine; alternate is present on Lys171. N6-succinyllysine; alternate is present on Lys171. A Glycyl lysine isopeptide (Lys-Gly) (interchain with G-Cter in SUMO2); alternate cross-link involves residue Lys171. 3 positions are modified to N6-acetyllysine: Lys180, Lys201, and Lys208. A Glycyl lysine isopeptide (Lys-Gly) (interchain with G-Cter in SUMO2); alternate cross-link involves residue Lys201. A Glycyl lysine isopeptide (Lys-Gly) (interchain with G-Cter in SUMO); alternate cross-link involves residue Lys201. Lys208 participates in a covalent cross-link: Glycyl lysine isopeptide (Lys-Gly) (interchain with G-Cter in SUMO2). The residue at position 212 (Ser212) is a Phosphoserine. Glycyl lysine isopeptide (Lys-Gly) (interchain with G-Cter in SUMO2) cross-links involve residues Lys219 and Lys233. The segment at 219 to 242 (KRRHETRLVEIDNGKQREFESRLA) is linker 2. 4 positions are modified to N6-acetyllysine: Lys233, Lys260, Lys265, and Lys270. Positions 243 to 383 (DALQELRAQH…HAYRKLLEGE (141 aa)) are coil 2. The segment at 259-331 (YKKELEKTYS…DLEDSLARER (73 aa)) is necessary and sufficient for the interaction with IFFO1. Residue Lys260 forms a Glycyl lysine isopeptide (Lys-Gly) (interchain with G-Cter in SUMO2); alternate linkage. Lys270 is covalently cross-linked (Glycyl lysine isopeptide (Lys-Gly) (interchain with G-Cter in SUMO2); alternate). Ser277 is modified (phosphoserine). Residue Ser282 is modified to Phosphoserine; by ATR. A phosphoserine mark is found at Ser301 and Ser307. Lys311 is covalently cross-linked (Glycyl lysine isopeptide (Lys-Gly) (interchain with G-Cter in SUMO2); alternate). N6-acetyllysine occurs at positions 311, 316, and 341. Glycyl lysine isopeptide (Lys-Gly) (interchain with G-Cter in SUMO2) cross-links involve residues Lys366 and Lys378. The interval 384–442 (EERLRLSPSPTSQRSRGRASSHSSQTQGGGSVTKKRKLESTESRSSFSQHARTSGRVAV) is disordered. The tract at residues 384–664 (EERLRLSPSP…TQSPQNCSIM (281 aa)) is tail. Ser390 carries the post-translational modification Phosphoserine. At Ser392 the chain carries Phosphoserine; by CDK1. The residue at position 395 (Ser395) is a Phosphoserine; by ATR. 6 positions are modified to phosphoserine: Ser398, Ser403, Ser404, Ser406, Ser407, and Ser414. Position 416 is a phosphothreonine (Thr416). Lys417 is modified (N6-acetyllysine). Glycyl lysine isopeptide (Lys-Gly) (interchain with G-Cter in SUMO2) cross-links involve residues Lys417 and Lys420. A Nuclear localization signal motif is present at residues 417–422 (KKRKLE). Phosphoserine occurs at positions 423, 426, 429, and 431. A compositionally biased stretch (polar residues) spans 426–435 (SRSSFSQHAR). The 118-residue stretch at 428–545 (SSFSQHARTS…EEVAMRKLVR (118 aa)) folds into the LTD domain. Lys450 participates in a covalent cross-link: Glycyl lysine isopeptide (Lys-Gly) (interchain with G-Cter in SUMO2); alternate. N6-acetyllysine occurs at positions 450 and 457. Phosphoserine occurs at positions 458 and 463. Glycyl lysine isopeptide (Lys-Gly) (interchain with G-Cter in SUMO2) cross-links involve residues Lys470 and Lys486. At Lys486 the chain carries N6-acetyllysine. 3 positions are modified to phosphothreonine: Thr496, Thr505, and Thr510. A phosphoserine mark is found at Ser533 and Ser546. Thr548 carries the post-translational modification Phosphothreonine. The tract at residues 552–576 (DDEDEDGDDLLHHHHGSHCSSSGDP) is disordered. A phosphoserine mark is found at Ser568 and Ser571. Lys597 participates in a covalent cross-link: Glycyl lysine isopeptide (Lys-Gly) (interchain with G-Cter in SUMO2); alternate. Lys597 participates in a covalent cross-link: Glycyl lysine isopeptide (Lys-Gly) (interchain with G-Cter in SUMO1); alternate. The disordered stretch occupies residues 598–619 (ASASGSGAQVGGPISSGSSASS). Phosphoserine is present on residues Ser612, Ser613, Ser616, and Ser619. Ser625 and Ser628 each carry an O-linked (GlcNAc) serine glycan. Phosphoserine is present on residues Ser628, Ser632, Ser636, and Ser652. Residues 647 to 661 (LLGNSSPRTQSPQNC) constitute a propeptide, removed in Lamin-A/C form. At Cys661 the chain carries Cysteine methyl ester. Cys661 carries S-farnesyl cysteine lipidation. A propeptide spans 662-664 (SIM) (removed in Prelamin-A/C form and in Lamin-A/C form).

It belongs to the intermediate filament family. Homodimer of lamin A and lamin C. Lamin dimers then assemble into dimeric head-to-tail polymers. Ultimately, two head-to-tail polymers assemble laterally into a protofilament with a uniformly shaped rod of 3.5 nm in diameter. Interacts with lamin-associated polypeptides IA, IB and TMPO-alpha, RB1 and with emerin. Interacts with SREBF1, SREBF2, SUN2 and TMEM43. Interacts with TMEM201. Proteolytically processed isoform A interacts with NARF. Interacts with SUN1. Interacts with MLIP. Interacts with DMPK; may regulate nuclear envelope stability. Interacts with SUV39H1; the interaction increases stability of SUV39H1. Interacts with SYNE2. Interacts with ITSN1 isoform 2. Interacts with IFFO1; enables the formation of an interior nucleoskeleton that is recruited to DNA double-strand breaks. In terms of assembly, interacts with EMD. As to quaternary structure, interacts (via C-terminus) with LEMD2 (via N-terminus) (in vitro). Post-translationally, proteolytic cleavage of the C-terminal of 18 residues of prelamin-A/C results in the production of lamin-A/C. The prelamin-A/C maturation pathway includes farnesylation of CAAX motif by protein farnesyltransferase (FNTA and FNTB), removal of the last three amino acids (-AAX) by RCE1/FACE2 and/or ZMPSTE24, methylation of the C-terminal cysteine by ICMT and endoproteolytic removal of the last 15 C-terminal amino acids by ZMPSTE24. Proteolytic cleavage requires prior farnesylation and methylation, and absence of these blocks cleavage. Farnesylation of prelamin-A/C facilitates nuclear envelope targeting. In terms of processing, phosphorylation plays a key role in lamin organization, subcellular localization and nuclear envelope disintegration. Phosphorylation by CDK1 at Ser-22 and Ser-392 at the onset of mitosis drives lamin disassembly and nuclear envelope breakdown. Phosphorylation at Ser-22 and Ser-392 during interphase promotes localization to the nucleoplasm and regulates lamina assembly. Phosphorylation at Ser-22, Ser-392 and Ser-628 during interphase causes redistribution between the nucleus and the cytoplasm. Phosphorylation at Ser-22 by CDK1 regulates matrix stiffness. Phosphorylation status of Ser-22 determines its localization between double-strand break (DSB) sites and the nuclear matrix. Phosphorylated by ATR at Ser-282 in response to DNA damage, leading to lamin disassembly and nuclear envelope rupture. Phosphorylation also regulates stability in micronuclei arising from genome instability: phosphorylation at Ser-395 by ATR in response to genome instability and double-stranded DNA breaks primes LMNA for subsequent phosphorylation at Ser-392 by CDK1 and micronuclei envelope rupture. The rupture of micronuclear envelope triggers the cGAS-STING pathway thereby activating the type I interferon response and innate immunity. Post-translationally, acetylation by KAT8 is required for nuclear architecture. Sumoylation is necessary for the localization to the nuclear envelope. As to expression, in the arteries, prelamin-A/C accumulation is not observed in young healthy vessels but is prevalent in medial vascular smooth muscle cells (VSMCs) from aged individuals and in atherosclerotic lesions, where it often colocalizes with senescent and degenerate VSMCs. Prelamin-A/C expression increases with age and disease. In normal aging, the accumulation of prelamin-A/C is caused in part by the down-regulation of ZMPSTE24/FACE1 in response to oxidative stress.

Its subcellular location is the nucleus lamina. The protein localises to the nucleus envelope. The protein resides in the nucleus. It is found in the nucleoplasm. It localises to the nucleus matrix. Its subcellular location is the nucleus speckle. Lamins are intermediate filament proteins that assemble into a filamentous meshwork, and which constitute the major components of the nuclear lamina, a fibrous layer on the nucleoplasmic side of the inner nuclear membrane. Lamins provide a framework for the nuclear envelope, bridging the nuclear envelope and chromatin, thereby playing an important role in nuclear assembly, chromatin organization, nuclear membrane and telomere dynamics. Lamin A and C also regulate matrix stiffness by conferring nuclear mechanical properties. The structural integrity of the lamina is strictly controlled by the cell cycle, as seen by the disintegration and formation of the nuclear envelope in prophase and telophase, respectively. Lamin A and C are present in equal amounts in the lamina of mammals. Also invoved in DNA repair: recruited by DNA repair proteins XRCC4 and IFFO1 to the DNA double-strand breaks (DSBs) to prevent chromosome translocation by immobilizing broken DNA ends. Required for normal development of peripheral nervous system and skeletal muscle and for muscle satellite cell proliferation. Required for osteoblastogenesis and bone formation. Also prevents fat infiltration of muscle and bone marrow, helping to maintain the volume and strength of skeletal muscle and bone. Required for cardiac homeostasis. Its function is as follows. Prelamin-A/C can accelerate smooth muscle cell senescence. It acts to disrupt mitosis and induce DNA damage in vascular smooth muscle cells (VSMCs), leading to mitotic failure, genomic instability, and premature senescence. This is Prelamin-A/C (LMNA) from Homo sapiens (Human).